A 240-amino-acid chain; its full sequence is ATP synthase subunit a (240 aa).

5 helical membrane-spanning segments follow: residues 21–41 (LSSM…AMLF), 83–103 (AVTL…FAII), 116–136 (DPTV…FYGV), 184–204 (LLGL…GAAI), and 207–227 (LIWQ…FVML).

The protein belongs to the ATPase A chain family. As to quaternary structure, F-type ATPases have 2 components, CF(1) - the catalytic core - and CF(0) - the membrane proton channel. CF(1) has five subunits: alpha(3), beta(3), gamma(1), delta(1), epsilon(1). CF(0) has three main subunits: a(1), b(2) and c(9-12). The alpha and beta chains form an alternating ring which encloses part of the gamma chain. CF(1) is attached to CF(0) by a central stalk formed by the gamma and epsilon chains, while a peripheral stalk is formed by the delta and b chains.

The protein localises to the cell membrane. Functionally, key component of the proton channel; it plays a direct role in the translocation of protons across the membrane. The polypeptide is ATP synthase subunit a (Macrococcus caseolyticus (strain JCSC5402) (Macrococcoides caseolyticum)).